The sequence spans 155 residues: SsrA-binding protein (155 aa).

It belongs to the SmpB family.

The protein localises to the cytoplasm. Required for rescue of stalled ribosomes mediated by trans-translation. Binds to transfer-messenger RNA (tmRNA), required for stable association of tmRNA with ribosomes. tmRNA and SmpB together mimic tRNA shape, replacing the anticodon stem-loop with SmpB. tmRNA is encoded by the ssrA gene; the 2 termini fold to resemble tRNA(Ala) and it encodes a 'tag peptide', a short internal open reading frame. During trans-translation Ala-aminoacylated tmRNA acts like a tRNA, entering the A-site of stalled ribosomes, displacing the stalled mRNA. The ribosome then switches to translate the ORF on the tmRNA; the nascent peptide is terminated with the 'tag peptide' encoded by the tmRNA and targeted for degradation. The ribosome is freed to recommence translation, which seems to be the essential function of trans-translation. The polypeptide is SsrA-binding protein (Ligilactobacillus salivarius (strain UCC118) (Lactobacillus salivarius)).